Here is a 389-residue protein sequence, read N- to C-terminus: GTPase Obg (389 aa).

Positions 1–159 constitute an Obg domain; it reads MKFVDEAKIL…REVLLELMLL (159 aa). One can recognise an OBG-type G domain in the interval 160-333; it reads ADVGMLGMPN…LCWDIMEFLK (174 aa). Residues 166–173, 191–195, 213–216, 283–286, and 314–316 each bind GTP; these read GMPNAGKS, FTTLV, DIPG, NKVD, and AAI. Mg(2+)-binding residues include S173 and T193. The tract at residues 362-389 is disordered; sequence QLENPDLEDDDEDWDEEDDDGVEFIYQR. Residues 364–383 show a composition bias toward acidic residues; that stretch reads ENPDLEDDDEDWDEEDDDGV.

Belongs to the TRAFAC class OBG-HflX-like GTPase superfamily. OBG GTPase family. Monomer. The cofactor is Mg(2+).

The protein resides in the cytoplasm. An essential GTPase which binds GTP, GDP and possibly (p)ppGpp with moderate affinity, with high nucleotide exchange rates and a fairly low GTP hydrolysis rate. Plays a role in control of the cell cycle, stress response, ribosome biogenesis and in those bacteria that undergo differentiation, in morphogenesis control. This is GTPase Obg from Proteus mirabilis (strain HI4320).